A 166-amino-acid chain; its full sequence is Large ribosomal subunit protein uL10 (166 aa).

It belongs to the universal ribosomal protein uL10 family. In terms of assembly, part of the ribosomal stalk of the 50S ribosomal subunit. The N-terminus interacts with L11 and the large rRNA to form the base of the stalk. The C-terminus forms an elongated spine to which L12 dimers bind in a sequential fashion forming a multimeric L10(L12)X complex.

In terms of biological role, forms part of the ribosomal stalk, playing a central role in the interaction of the ribosome with GTP-bound translation factors. The protein is Large ribosomal subunit protein uL10 (rplJ) of Neisseria meningitidis serogroup A / serotype 4A (strain DSM 15465 / Z2491).